Reading from the N-terminus, the 144-residue chain is Large ribosomal subunit protein uL11 (144 aa).

Belongs to the universal ribosomal protein uL11 family. In terms of assembly, part of the ribosomal stalk of the 50S ribosomal subunit. Interacts with L10 and the large rRNA to form the base of the stalk. L10 forms an elongated spine to which L12 dimers bind in a sequential fashion forming a multimeric L10(L12)X complex. Post-translationally, one or more lysine residues are methylated.

In terms of biological role, forms part of the ribosomal stalk which helps the ribosome interact with GTP-bound translation factors. This is Large ribosomal subunit protein uL11 from Polaromonas sp. (strain JS666 / ATCC BAA-500).